The primary structure comprises 287 residues: 3-hydroxyanthranilate 3,4-dioxygenase (287 aa).

The interval 1-163 (MTNQSLHVNI…SKENETGKPD (163 aa)) is domain A (catalytic). Position 46 (Arg-46) interacts with O2. Residues His-50, Glu-56, and His-94 each coordinate Fe cation. Glu-56 lines the substrate pocket. Residues Arg-98 and Glu-108 each contribute to the substrate site. The segment at 164–180 (PANPIKPAPYPLNTMNV) is linker. Residues 181–287 (MTPFSFREWV…AQDPDRKRPY (107 aa)) form a domain B region.

Belongs to the 3-HAO family. Monomer. Fe(2+) serves as cofactor.

It localises to the cytoplasm. It is found in the cytosol. The enzyme catalyses 3-hydroxyanthranilate + O2 = (2Z,4Z)-2-amino-3-carboxymuconate 6-semialdehyde. It functions in the pathway cofactor biosynthesis; NAD(+) biosynthesis; quinolinate from L-kynurenine: step 3/3. Its function is as follows. Catalyzes the oxidative ring opening of 3-hydroxyanthranilate to 2-amino-3-carboxymuconate semialdehyde, which spontaneously cyclizes to quinolinate. This Danio rerio (Zebrafish) protein is 3-hydroxyanthranilate 3,4-dioxygenase (haao).